Reading from the N-terminus, the 234-residue chain is 1-(5-phosphoribosyl)-5-[(5-phosphoribosylamino)methylideneamino] imidazole-4-carboxamide isomerase (234 aa).

Asp-9 functions as the Proton acceptor in the catalytic mechanism. Asp-131 acts as the Proton donor in catalysis.

The protein belongs to the HisA/HisF family.

It is found in the cytoplasm. It catalyses the reaction 1-(5-phospho-beta-D-ribosyl)-5-[(5-phospho-beta-D-ribosylamino)methylideneamino]imidazole-4-carboxamide = 5-[(5-phospho-1-deoxy-D-ribulos-1-ylimino)methylamino]-1-(5-phospho-beta-D-ribosyl)imidazole-4-carboxamide. The protein operates within amino-acid biosynthesis; L-histidine biosynthesis; L-histidine from 5-phospho-alpha-D-ribose 1-diphosphate: step 4/9. This is 1-(5-phosphoribosyl)-5-[(5-phosphoribosylamino)methylideneamino] imidazole-4-carboxamide isomerase from Staphylococcus epidermidis (strain ATCC 35984 / DSM 28319 / BCRC 17069 / CCUG 31568 / BM 3577 / RP62A).